We begin with the raw amino-acid sequence, 345 residues long: AA9 family lytic polysaccharide monooxygenase D (345 aa).

Positions 1 to 21 (MPSFTSKTLLAALAGAAAVNA) are cleaved as a signal peptide. Histidine 22 and histidine 107 together coordinate Cu(2+). Cysteine 77 and cysteine 200 are disulfide-bonded. An N-linked (GlcNAc...) asparagine glycan is attached at asparagine 160. 2 residues coordinate O2: histidine 186 and glutamine 195. A Cu(2+)-binding site is contributed by tyrosine 197. Residues 315 to 345 (VQTSTRPISTRPQPTRCPGLGRRHLRKVARA) are disordered. Over residues 318-327 (STRPISTRPQ) the composition is skewed to polar residues. Over residues 335-345 (GRRHLRKVARA) the composition is skewed to basic residues.

This sequence belongs to the polysaccharide monooxygenase AA9 family. The cofactor is Cu(2+).

The protein resides in the secreted. It catalyses the reaction [(1-&gt;4)-beta-D-glucosyl]n+m + reduced acceptor + O2 = 4-dehydro-beta-D-glucosyl-[(1-&gt;4)-beta-D-glucosyl]n-1 + [(1-&gt;4)-beta-D-glucosyl]m + acceptor + H2O.. Functionally, lytic polysaccharide monooxygenase (LPMO) that depolymerizes crystalline and amorphous polysaccharides via the oxidation of scissile alpha- or beta-(1-4)-glycosidic bonds, yielding C1 or C4 oxidation products. Catalysis by LPMOs requires the reduction of the active-site copper from Cu(II) to Cu(I) by a reducing agent and H(2)O(2) or O(2) as a cosubstrate. In Podospora anserina (strain S / ATCC MYA-4624 / DSM 980 / FGSC 10383) (Pleurage anserina), this protein is AA9 family lytic polysaccharide monooxygenase D.